A 59-amino-acid polypeptide reads, in one-letter code: Large ribosomal subunit protein uL30 (59 aa).

It belongs to the universal ribosomal protein uL30 family. As to quaternary structure, part of the 50S ribosomal subunit.

This is Large ribosomal subunit protein uL30 from Aliivibrio fischeri (strain MJ11) (Vibrio fischeri).